Here is a 283-residue protein sequence, read N- to C-terminus: Secretory carrier-associated membrane protein 2 (283 aa).

The interval 1-47 (MARHDPNPFADEEINPFANHTSVPPASNSYLKPLPPEPYDRGATVDI) is disordered. Residues 1 to 123 (MARHDPNPFA…LQKIQYVAFT (123 aa)) are Cytoplasmic-facing. Residues 18–30 (ANHTSVPPASNSY) are compositionally biased toward polar residues. Residues 50 to 87 (DSGNDLRAKEMELQAKENELKRKEQELKRREDAIARTG) adopt a coiled-coil conformation. The next 4 membrane-spanning stretches (helical) occupy residues 124-144 (TLLG…VAWI), 151-171 (IWLL…VLWY), 186-206 (FGAF…AAVA), and 234-254 (IMYF…IWVI). Residues 255–283 (QQVYAYFRGSGKAAEMKREATKSTLMRAL) lie on the Cytoplasmic side of the membrane.

It belongs to the SCAMP family.

It localises to the cell membrane. It is found in the cytoplasmic vesicle. The protein localises to the secretory vesicle membrane. In terms of biological role, probably involved in membrane trafficking. This Arabidopsis thaliana (Mouse-ear cress) protein is Secretory carrier-associated membrane protein 2 (SCAMP2).